Reading from the N-terminus, the 709-residue chain is Nucleobase-ascorbate transporter 11 (709 aa).

Disordered stretches follow at residues 1–28 (MDSG…YGER) and 58–167 (TGFV…SEDG). The span at 15–25 (KGNGSGGGNGY) shows a compositional bias: gly residues. The segment covering 65 to 74 (SGETSTSTRT) has biased composition (polar residues). 3 stretches are compositionally biased toward basic and acidic residues: residues 75–89 (KFGE…KGRD), 108–132 (NRPE…RLNR), and 142–151 (EGGKINKDLE). A run of 12 helical transmembrane segments spans residues 196–216 (YLSL…AMDG), 222–242 (ASVI…HCYF), 246–266 (LPLV…VINS), 288–308 (IIVG…SLLL), 310–330 (FINP…FFSY), 336–356 (GTCV…TLYL), 369–389 (IYAV…LTVG), 454–474 (IIMI…YHSA), 532–552 (LVIG…GAIL), 555–575 (IPQA…VSLG), 590–610 (ITIV…FQQY), and 642–662 (FAMN…AFIL).

Belongs to the nucleobase:cation symporter-2 (NCS2) (TC 2.A.40) family. As to expression, expressed in leaf primordia and vasculature of pedicels, rosette leaves, sepals, carpels and siliques. Expressed in the root central cylinder.

The protein localises to the membrane. This chain is Nucleobase-ascorbate transporter 11 (NAT11), found in Arabidopsis thaliana (Mouse-ear cress).